Here is a 65-residue protein sequence, read N- to C-terminus: Large ribosomal subunit protein uL29 (65 aa).

It belongs to the universal ribosomal protein uL29 family.

The chain is Large ribosomal subunit protein uL29 (rpmC) from Xylella fastidiosa (strain 9a5c).